Reading from the N-terminus, the 59-residue chain is Small, acid-soluble spore protein H (59 aa).

Belongs to the SspH family.

It localises to the spore core. The sequence is that of Small, acid-soluble spore protein H from Bacillus cereus (strain ZK / E33L).